The following is a 516-amino-acid chain: MPSPTFRLYNTLTHETEPVEPIEEEHLRFYSCGPTVYMYAHIGNFRSFLTADLIRRTAEAIGWDVTNVSNITDVGHLTQDDLVDPGGEDKMQRALEREGERFANIYDLARHYTEAFLEDWGALNLREPEVRPRATEHVTDQLEAVIELVEKEHAYTTDQGVYFSVESVEDYGHLSGNTEAQQLQATERDVVEDPDKRDPRDFALWKHDPQHLMHWHSPWGWGYPGWHIECSVMGMQYLGDRFDLHTGGEDLIFPHHECEIAQNQSLAGHQVVNYWVHTRFLQVEGEKMSKSKGNFYTVRDLIAPGPDDDHVPDSVREQGGVDPLALRYALMQGQYRKPFNFTLDTLHTAARHVRRYQDAAERVDAALAADADGPDELGGRLRPIYDRTLEAMCDDLNTPAATAAALDGVKAIEQTDRLNGATARSARNWLDRTNALLGVVEPEHEADQRTDAGSENGLAPAHLSDSIDTLLEDREAARADGEYARADAIRDTLEALGIEVMDTPDGTEWERREQVG.

Residue Cys32 coordinates Zn(2+). A 'HIGH' region motif is present at residues 34 to 44 (PTVYMYAHIGN). Zn(2+)-binding residues include Cys230, His255, and Glu259. The short motif at 287–291 (KMSKS) is the 'KMSKS' region element. Lys290 lines the ATP pocket.

This sequence belongs to the class-I aminoacyl-tRNA synthetase family. In terms of assembly, monomer. Requires Zn(2+) as cofactor.

The protein localises to the cytoplasm. It carries out the reaction tRNA(Cys) + L-cysteine + ATP = L-cysteinyl-tRNA(Cys) + AMP + diphosphate. In Salinibacter ruber (strain DSM 13855 / M31), this protein is Cysteine--tRNA ligase.